A 594-amino-acid chain; its full sequence is UvrABC system protein C (594 aa).

Residues 13–99 enclose the GIY-YIG domain; it reads HSSGVYQYFD…IKQLKPKYNI (87 aa). Positions 205-240 constitute a UVR domain; sequence DKLIKELELKMERLSNNLRFEEALIYRDRIAKIQKI.

This sequence belongs to the UvrC family. Interacts with UvrB in an incision complex.

Its subcellular location is the cytoplasm. The UvrABC repair system catalyzes the recognition and processing of DNA lesions. UvrC both incises the 5' and 3' sides of the lesion. The N-terminal half is responsible for the 3' incision and the C-terminal half is responsible for the 5' incision. The sequence is that of UvrABC system protein C from Helicobacter pylori (strain Shi470).